We begin with the raw amino-acid sequence, 501 residues long: Aldehyde dehydrogenase 1A1 (501 aa).

The residue at position 2 (Ser-2) is an N-acetylserine. N6-acetyllysine is present on residues Lys-91 and Lys-128. NAD(+)-binding positions include 167-170 (IPWN), 193-196 (KPAE), 226-227 (GP), and 246-247 (GS). Lys-252 bears the N6-acetyllysine mark. Residue Glu-269 is the Proton acceptor of the active site. Position 269-271 (269-271 (ELG)) interacts with NAD(+). The active-site Nucleophile is the Cys-303. The tract at residues 336–501 (LTPGATQGPQ…VTVKISQKNS (166 aa)) is mediates interaction with PRMT3. Thr-337 is subject to Phosphothreonine. Position 349–353 (349–353 (EQYDK)) interacts with NAD(+). Lys-353 and Lys-367 each carry N6-acetyllysine. Position 400-402 (400-402 (EIF)) interacts with NAD(+). Lys-410 carries the post-translational modification N6-acetyllysine. A Phosphoserine modification is found at Ser-413. N6-acetyllysine is present on residues Lys-419 and Lys-495.

This sequence belongs to the aldehyde dehydrogenase family. In terms of assembly, homotetramer. Interacts with PRMT3; the interaction is direct, inhibits ALDH1A1 aldehyde dehydrogenase activity and is independent of the methyltransferase activity of PRMT3. In terms of processing, the N-terminus is blocked most probably by acetylation.

Its subcellular location is the cytoplasm. The protein resides in the cytosol. The protein localises to the cell projection. It is found in the axon. The catalysed reaction is an aldehyde + NAD(+) + H2O = a carboxylate + NADH + 2 H(+). It carries out the reaction all-trans-retinal + NAD(+) + H2O = all-trans-retinoate + NADH + 2 H(+). It catalyses the reaction 9-cis-retinal + NAD(+) + H2O = 9-cis-retinoate + NADH + 2 H(+). The enzyme catalyses 11-cis-retinal + NAD(+) + H2O = 11-cis-retinoate + NADH + 2 H(+). The catalysed reaction is 13-cis-retinal + NAD(+) + H2O = 13-cis-retinoate + NADH + 2 H(+). It carries out the reaction 3-deoxyglucosone + NAD(+) + H2O = 2-dehydro-3-deoxy-D-gluconate + NADH + 2 H(+). It catalyses the reaction (E)-4-hydroxynon-2-enal + NAD(+) + H2O = (E)-4-hydroxynon-2-enoate + NADH + 2 H(+). The enzyme catalyses malonaldehyde + NAD(+) + H2O = 3-oxopropanoate + NADH + 2 H(+). The catalysed reaction is hexanal + NAD(+) + H2O = hexanoate + NADH + 2 H(+). It carries out the reaction propanal + NAD(+) + H2O = propanoate + NADH + 2 H(+). It catalyses the reaction acetaldehyde + NAD(+) + H2O = acetate + NADH + 2 H(+). The enzyme catalyses benzaldehyde + NAD(+) + H2O = benzoate + NADH + 2 H(+). The catalysed reaction is 4-aminobutanal + NAD(+) + H2O = 4-aminobutanoate + NADH + 2 H(+). The protein operates within cofactor metabolism; retinol metabolism. In terms of biological role, cytosolic dehydrogenase that catalyzes the irreversible oxidation of a wide range of aldehydes to their corresponding carboxylic acid. Functions downstream of retinol dehydrogenases and catalyzes the oxidation of retinaldehyde into retinoic acid, the second step in the oxidation of retinol/vitamin A into retinoic acid. This pathway is crucial to control the levels of retinol and retinoic acid, two important molecules which excess can be teratogenic and cytotoxic. Also oxidizes aldehydes resulting from lipid peroxidation like (E)-4-hydroxynon-2-enal/HNE, malonaldehyde and hexanal that form protein adducts and are highly cytotoxic. By participating for instance to the clearance of (E)-4-hydroxynon-2-enal/HNE in the lens epithelium prevents the formation of HNE-protein adducts and lens opacification. Also functions downstream of fructosamine-3-kinase in the fructosamine degradation pathway by catalyzing the oxidation of 3-deoxyglucosone, the carbohydrate product of fructosamine 3-phosphate decomposition, which is itself a potent glycating agent that may react with lysine and arginine side-chains of proteins. Also has an aminobutyraldehyde dehydrogenase activity and is probably part of an alternative pathway for the biosynthesis of GABA/4-aminobutanoate in midbrain, thereby playing a role in GABAergic synaptic transmission. In Macaca fascicularis (Crab-eating macaque), this protein is Aldehyde dehydrogenase 1A1.